A 259-amino-acid polypeptide reads, in one-letter code: Global transcriptional regulator CodY (259 aa).

Positions 1–155 (MSLLSRMRKI…GATVVGMEIL (155 aa)) are GAF domain. A DNA-binding region (H-T-H motif) is located at residues 203–222 (ASKIADRVGITRSVIVNALR). Phosphoserine is present on Ser215.

The protein belongs to the CodY family.

It localises to the cytoplasm. In terms of biological role, DNA-binding global transcriptional regulator which is involved in the adaptive response to starvation and acts by directly or indirectly controlling the expression of numerous genes in response to nutrient availability. During rapid exponential growth, CodY is highly active and represses genes whose products allow adaptation to nutrient depletion. The polypeptide is Global transcriptional regulator CodY (Halalkalibacterium halodurans (strain ATCC BAA-125 / DSM 18197 / FERM 7344 / JCM 9153 / C-125) (Bacillus halodurans)).